The primary structure comprises 542 residues: MAKMIVFNEEARRALEKGVNTLAEAVRVTLGPKGRNVVLEKKFGSPLITNDGVTIAKEIELENPIENMGAQLVKEVATKTNDVAGDGTTTATILAQAIIREGMKNVAAGANPMVLKRGIEKAVEKAVAEIKAIAKPVESKEAIAQVAAISAGDATIGNLIAEAMEKVGKDGVITVEESKGFTTDLEVVEGMNFDRGYISPYMITDPDKMEAVLNDPYILITDKKISSVKDILPVLERVVQSGKQMVIIAEDVEGEALATLVVNKLRGTFTCVAVKAPGFGDRRKAMLEDIAILTGGRVVSEEVGIKLDSATIDMLGRARQVRIKKEETIIVDGAGRADDIKARIAQIRRQHEESTSEFDKEKLQERLAKLAGGVAVIQVGAATETELKDKKLRIEDALNATRAAVEEGIVPGGGTALVSIQKALDNVETPAGDEATGVAIIRRALEEPLRQIANNAGYEGSVVVEKVKSLPVGQGFNAATEVYEDMIAAGIVDPAKVTRSALQNAASIAAMLLTTEAIVADKPEKKDAPAMSPGMGGMDMGM.

Residues 29-32 (TLGP), 86-90 (DGTTT), Gly413, 477-479 (NAA), and Asp493 each bind ATP.

This sequence belongs to the chaperonin (HSP60) family. In terms of assembly, forms a cylinder of 14 subunits composed of two heptameric rings stacked back-to-back. Interacts with the co-chaperonin GroES.

It is found in the cytoplasm. It carries out the reaction ATP + H2O + a folded polypeptide = ADP + phosphate + an unfolded polypeptide.. Together with its co-chaperonin GroES, plays an essential role in assisting protein folding. The GroEL-GroES system forms a nano-cage that allows encapsulation of the non-native substrate proteins and provides a physical environment optimized to promote and accelerate protein folding. In Heliobacterium modesticaldum (strain ATCC 51547 / Ice1), this protein is Chaperonin GroEL.